The chain runs to 302 residues: Acetyl-coenzyme A carboxylase carboxyl transferase subunit beta (302 aa).

A CoA carboxyltransferase N-terminal domain is found at 25-294 (VWTKCDSCGQ…PHFDEAAPVS (270 aa)). Residues cysteine 29, cysteine 32, cysteine 48, and cysteine 51 each coordinate Zn(2+). The C4-type zinc finger occupies 29 to 51 (CDSCGQVLYRAELERNLEVCPKC). Positions 281-302 (NQPQPHFDEAAPVSEQENQADA) are disordered.

This sequence belongs to the AccD/PCCB family. In terms of assembly, acetyl-CoA carboxylase is a heterohexamer composed of biotin carboxyl carrier protein (AccB), biotin carboxylase (AccC) and two subunits each of ACCase subunit alpha (AccA) and ACCase subunit beta (AccD). The cofactor is Zn(2+).

The protein resides in the cytoplasm. It catalyses the reaction N(6)-carboxybiotinyl-L-lysyl-[protein] + acetyl-CoA = N(6)-biotinyl-L-lysyl-[protein] + malonyl-CoA. It participates in lipid metabolism; malonyl-CoA biosynthesis; malonyl-CoA from acetyl-CoA: step 1/1. Its function is as follows. Component of the acetyl coenzyme A carboxylase (ACC) complex. Biotin carboxylase (BC) catalyzes the carboxylation of biotin on its carrier protein (BCCP) and then the CO(2) group is transferred by the transcarboxylase to acetyl-CoA to form malonyl-CoA. The protein is Acetyl-coenzyme A carboxylase carboxyl transferase subunit beta of Serratia proteamaculans (strain 568).